A 309-amino-acid polypeptide reads, in one-letter code: Ribosomal protein L11 methyltransferase (309 aa).

S-adenosyl-L-methionine contacts are provided by T144, G165, D187, and N235.

The protein belongs to the methyltransferase superfamily. PrmA family.

It localises to the cytoplasm. It catalyses the reaction L-lysyl-[protein] + 3 S-adenosyl-L-methionine = N(6),N(6),N(6)-trimethyl-L-lysyl-[protein] + 3 S-adenosyl-L-homocysteine + 3 H(+). In terms of biological role, methylates ribosomal protein L11. The sequence is that of Ribosomal protein L11 methyltransferase from Prochlorococcus marinus (strain MIT 9215).